Consider the following 408-residue polypeptide: LL-diaminopimelate aminotransferase (408 aa).

Residues Tyr-15 and Gly-42 each coordinate substrate. Residues Tyr-72, 108–109 (SK), Tyr-132, Asn-187, Tyr-218, and 246–248 (SFS) contribute to the pyridoxal 5'-phosphate site. Substrate is bound by residues Lys-109, Tyr-132, and Asn-187. Lys-249 carries the N6-(pyridoxal phosphate)lysine modification. Pyridoxal 5'-phosphate is bound by residues Arg-257 and Asn-292. Substrate contacts are provided by Asn-292 and Arg-388.

Belongs to the class-I pyridoxal-phosphate-dependent aminotransferase family. LL-diaminopimelate aminotransferase subfamily. Homodimer. The cofactor is pyridoxal 5'-phosphate.

It carries out the reaction (2S,6S)-2,6-diaminopimelate + 2-oxoglutarate = (S)-2,3,4,5-tetrahydrodipicolinate + L-glutamate + H2O + H(+). Its pathway is amino-acid biosynthesis; L-lysine biosynthesis via DAP pathway; LL-2,6-diaminopimelate from (S)-tetrahydrodipicolinate (aminotransferase route): step 1/1. Involved in the synthesis of meso-diaminopimelate (m-DAP or DL-DAP), required for both lysine and peptidoglycan biosynthesis. Catalyzes the direct conversion of tetrahydrodipicolinate to LL-diaminopimelate. This chain is LL-diaminopimelate aminotransferase, found in Prochlorococcus marinus (strain MIT 9211).